Consider the following 307-residue polypeptide: 4-hydroxy-tetrahydrodipicolinate synthase (307 aa).

Thr-57 is a pyruvate binding site. The active-site Proton donor/acceptor is Tyr-145. The active-site Schiff-base intermediate with substrate is Lys-173. A pyruvate-binding site is contributed by Val-215.

Belongs to the DapA family. Homotetramer; dimer of dimers.

The protein resides in the cytoplasm. The enzyme catalyses L-aspartate 4-semialdehyde + pyruvate = (2S,4S)-4-hydroxy-2,3,4,5-tetrahydrodipicolinate + H2O + H(+). It functions in the pathway amino-acid biosynthesis; L-lysine biosynthesis via DAP pathway; (S)-tetrahydrodipicolinate from L-aspartate: step 3/4. Catalyzes the condensation of (S)-aspartate-beta-semialdehyde [(S)-ASA] and pyruvate to 4-hydroxy-tetrahydrodipicolinate (HTPA). This is 4-hydroxy-tetrahydrodipicolinate synthase from Leptospira interrogans serogroup Icterohaemorrhagiae serovar copenhageni (strain Fiocruz L1-130).